A 91-amino-acid chain; its full sequence is MQITDVRIRKIASEGKMKGIVSVTFDNEFVVHDIKVIEGQMGLFIAMPSRKTPDGEFKDIAHPINTEAREKIQTAILEAYEKAVSEEVVEG.

It belongs to the SpoVG family.

Functionally, could be involved in septation. This Clostridium beijerinckii (strain ATCC 51743 / NCIMB 8052) (Clostridium acetobutylicum) protein is Putative septation protein SpoVG.